Consider the following 320-residue polypeptide: Malate dehydrogenase (320 aa).

Residues 10 to 15 (GSGMIG) and aspartate 34 each bind NAD(+). Residues arginine 83 and arginine 89 each contribute to the substrate site. NAD(+) is bound by residues asparagine 96 and 119-121 (ITN). Positions 121 and 152 each coordinate substrate. Histidine 176 functions as the Proton acceptor in the catalytic mechanism.

This sequence belongs to the LDH/MDH superfamily. MDH type 3 family.

It carries out the reaction (S)-malate + NAD(+) = oxaloacetate + NADH + H(+). Catalyzes the reversible oxidation of malate to oxaloacetate. The sequence is that of Malate dehydrogenase from Bartonella quintana (strain Toulouse) (Rochalimaea quintana).